Reading from the N-terminus, the 60-residue chain is Large ribosomal subunit protein uL30 (60 aa).

The protein belongs to the universal ribosomal protein uL30 family. Part of the 50S ribosomal subunit.

The polypeptide is Large ribosomal subunit protein uL30 (Paracidovorax citrulli (strain AAC00-1) (Acidovorax citrulli)).